A 1240-amino-acid polypeptide reads, in one-letter code: Phospholipid-transporting ATPase 6 (1240 aa).

Residues 1–75 (MARRRIRSRI…TTRYNLLTFL (75 aa)) lie on the Cytoplasmic side of the membrane. Residues 76–97 (PKCLYEQFHRVANFYFLVAAIL) traverse the membrane as a helical segment. Residues 98–101 (SVFP) lie on the Extracellular side of the membrane. The helical transmembrane segment at 102 to 124 (LSPFNKWSMIAPLVFVVGLSMGK) threads the bilayer. At 125 to 306 (EALEDWRRFM…SRIEKRMDYI (182 aa)) the chain is on the cytoplasmic side. A helical membrane pass occupies residues 307–328 (IYTLFALLLTVSFISSLGFAVM). The Extracellular segment spans residues 329–360 (TKLLMAEWWYLRPDKPESLTNPTNPLYAWVVH). A helical membrane pass occupies residues 361-378 (LITALLLYGYLIPISLYV). Over 379–943 (SIEVVKVLQA…HGHWCYKRIA (565 aa)) the chain is Cytoplasmic. The active-site 4-aspartylphosphate intermediate is aspartate 426. Lysine 625 participates in a covalent cross-link: Glycyl lysine isopeptide (Lys-Gly) (interchain with G-Cter in ubiquitin). Aspartate 888 and aspartate 892 together coordinate Mg(2+). A helical transmembrane segment spans residues 944 to 963 (QMICYFFYKNITFGLTLFYF). The Extracellular segment spans residues 964 to 977 (ECFTGFSGQSIYND). A helical membrane pass occupies residues 978–997 (SYLLLFNVVLTSLPVISLGV). Over 998 to 1027 (FEQDVPSDVCLQFPALYQQGPKNLFFDWYR) the chain is Cytoplasmic. Residues 1028–1050 (ILGWMGNGVYASIVIFTLNLGIF) traverse the membrane as a helical segment. The Extracellular portion of the chain corresponds to 1051–1063 (HVQSFRSDGQTAD). A helical membrane pass occupies residues 1064–1086 (MNAMGTAMFTCIIWAVNVQIALT). Residues 1087-1092 (MSHFTW) lie on the Cytoplasmic side of the membrane. Residues 1093-1113 (IQHVMIWGSIGAWYVFLALYG) traverse the membrane as a helical segment. The Extracellular portion of the chain corresponds to 1114 to 1130 (MLPVKLSGNIFHMLVEI). The chain crosses the membrane as a helical span at residues 1131–1155 (LAPAPIFWLTSLLVIAATTLPYLFH). Residues 1156–1240 (ISYQRSVNPL…SNDTPSSNSQ (85 aa)) lie on the Cytoplasmic side of the membrane.

The protein belongs to the cation transport ATPase (P-type) (TC 3.A.3) family. Type IV subfamily.

It is found in the cell membrane. Its subcellular location is the endomembrane system. The catalysed reaction is ATP + H2O + phospholipidSide 1 = ADP + phosphate + phospholipidSide 2.. Involved in transport of phospholipids and in regulation of pollen plasma membrane lipid asymmetry. The polypeptide is Phospholipid-transporting ATPase 6 (Arabidopsis thaliana (Mouse-ear cress)).